Reading from the N-terminus, the 356-residue chain is 3,4-dihydroxy-2-butanone 4-phosphate synthase (356 aa).

The interval 1 to 211 (MNAILSDQKT…ISDIVEYRMM (211 aa)) is DHBP synthase. Residues 38 to 39 (RE), Asp43, 150 to 154 (RIGHT), and Glu174 contribute to the D-ribulose 5-phosphate site. Glu39 contributes to the Mg(2+) binding site. His153 lines the Mg(2+) pocket. Residues 212–356 (NESLIRVIAE…KSTNVNETVA (145 aa)) are GTP cyclohydrolase II-like.

It in the N-terminal section; belongs to the DHBP synthase family. The protein in the C-terminal section; belongs to the GTP cyclohydrolase II family. It depends on Mg(2+) as a cofactor. Requires Mn(2+) as cofactor.

The enzyme catalyses D-ribulose 5-phosphate = (2S)-2-hydroxy-3-oxobutyl phosphate + formate + H(+). The protein operates within cofactor biosynthesis; riboflavin biosynthesis; 2-hydroxy-3-oxobutyl phosphate from D-ribulose 5-phosphate: step 1/1. Catalyzes the conversion of D-ribulose 5-phosphate to formate and 3,4-dihydroxy-2-butanone 4-phosphate. The protein is 3,4-dihydroxy-2-butanone 4-phosphate synthase (ribB) of Sulfurospirillum multivorans (Dehalospirillum multivorans).